Consider the following 587-residue polypeptide: Cryptochrome-1 (587 aa).

The Photolyase/cryptochrome alpha/beta domain maps to 3-132; sequence VNAVHWFRKG…EVIVRISHTL (130 aa). Lys-11 is covalently cross-linked (Glycyl lysine isopeptide (Lys-Gly) (interchain with G-Cter in ubiquitin)). Residues 50-54 carry the LIR 1 motif; sequence NRWRF. Ser-71 carries the post-translational modification Phosphoserine; by AMPK. The LIR 2 motif lies at 82-87; sequence DVFPRL. Lys-107 is covalently cross-linked (Glycyl lysine isopeptide (Lys-Gly) (interchain with G-Cter in ubiquitin)). The short motif at 151–156 is the LIR 3 element; sequence KRFQTL. Lys-159 participates in a covalent cross-link: Glycyl lysine isopeptide (Lys-Gly) (interchain with G-Cter in ubiquitin). Phosphoserine; by MAPK is present on Ser-247. Ser-252 is a binding site for FAD. Short sequence motifs (LIR) lie at residues 255-260 and 271-276; these read LRFGCL and DLYKKV. Ser-280 carries the post-translational modification Phosphoserine; by AMPK. An LIR 6 motif is present at residues 285–290; it reads SLYGQL. FAD is bound at residue Gln-289. Lys-329 participates in a covalent cross-link: Glycyl lysine isopeptide (Lys-Gly) (interchain with G-Cter in ubiquitin). The short motif at 335-339 is the LIR 7 element; it reads TGFPW. His-355 serves as a coordination point for FAD. Residues 371–470 are required for inhibition of CLOCK-BMAL1-mediated transcription; that stretch reads WISWEEGMKV…LIGVNYPKPM (100 aa). Residues 379–384 carry the LIR 8 motif; the sequence is KVFEEL. Position 387 to 389 (387 to 389) interacts with FAD; the sequence is DAD. 3 short sequence motifs (LIR) span residues 395–400, 411–416, and 430–435; these read GSWMWL, HCYCPV, and RRYLPV. The interaction with TIMELESS stretch occupies residues 471-493; the sequence is VNHAEASRLNIERMKQIYQQLSR. Residue Lys-485 forms a Glycyl lysine isopeptide (Lys-Gly) (interchain with G-Cter in ubiquitin) linkage. 2 short sequence motifs (LIR) span residues 486-491 and 492-497; these read QIYQQL and SRYRGL. The segment at 554-587 is disordered; that stretch reads GSSSMGHGLSNGKRPSQEEDTQSIGPKVQRQSTN. At Ser-569 the chain carries Phosphoserine.

This sequence belongs to the DNA photolyase class-1 family. Component of the circadian core oscillator, which includes the CRY proteins, CLOCK or NPAS2, BMAL1 or BMAL2, CSNK1D and/or CSNK1E, TIMELESS, and the PER proteins. Interacts directly with TIMELESS. Interacts directly with PER1, PER2 and PER3; interaction with PER2 inhibits its ubiquitination and vice versa. Interacts with FBXL21. Interacts with FBXL3. Interacts with CLOCK-BMAL1 independently of PER2 and DNA. Interacts with HDAC1, HDAC2 and SIN3B. Interacts with nuclear receptors AR, NR1D1, NR3C1/GR, RORA and RORC; the interaction with at least NR3C1/GR is ligand dependent. Interacts with PRKDC. Interacts with the G protein subunit alpha GNAS; the interaction may block GPCR-mediated regulation of cAMP concentrations. Interacts with PRMT5. Interacts with EZH2. Interacts with MYBBP1A, DOCK7, HNRNPU, RPL7A, RPL8 and RPS3. Interacts with PPP5C (via TPR repeats). Interacts with MAP1LC3B. Interacts with CLOCK. Interacts with BMAL1. Interacts weakly with HDAC3; this interaction is enhanced in the presence of FBXL3. Interacts with TRIM28, KCTD5 and DDB1 Interacts with HNF4A. Interacts with PSMD2 in a KDM8-dependent manner. Interacts with KDM8 in a FBXL3-dependent manner. Interacts with PPARG in a ligand-dependent manner. Interacts with PPARD (via domain NR LBD) and NR1I2 (via domain NR LBD) in a ligand-dependent manner. Interacts with PPARA, NR1I3 and VDR. Requires FAD as cofactor. The cofactor is (6R)-5,10-methylene-5,6,7,8-tetrahydrofolate. Phosphorylation on Ser-247 by MAPK is important for the inhibition of CLOCK-BMAL1-mediated transcriptional activity. Phosphorylation by CSNK1E requires interaction with PER1 or PER2. Phosphorylation at Ser-71 and Ser-280 by AMPK decreases protein stability. Phosphorylation at Ser-569 exhibits a robust circadian rhythm with a peak at CT8, increases protein stability, prevents SCF(FBXL3)-mediated degradation and is antagonized by interaction with PRKDC. In terms of processing, ubiquitinated by the SCF(FBXL3) and SCF(FBXL21) complexes, regulating the balance between degradation and stabilization. The SCF(FBXL3) complex is mainly nuclear and mediates ubiquitination and subsequent degradation of CRY1. In contrast, cytoplasmic SCF(FBXL21) complex-mediated ubiquitination leads to stabilize CRY1 and counteract the activity of the SCF(FBXL3) complex. The SCF(FBXL3) and SCF(FBXL21) complexes probably mediate ubiquitination at different Lys residues. Ubiquitination at Lys-11 and Lys-107 are specifically ubiquitinated by the SCF(FBXL21) complex but not by the SCF(FBXL3) complex. Ubiquitination may be inhibited by PER2. Deubiquitinated by USP7. Post-translationally, undergoes autophagy-mediated degradation in the liver in a time-dependent manner. Autophagic degradation of CRY1 (an inhibitor of gluconeogenesis) occurs during periods of reduced feeding allowing induction of gluconeogenesis and maintenance of blood glucose levels. As to expression, expressed in all tissues tested including spleen, liver, skeletal muscle, kidney, brain, intestine, eye, harderian gland, liver and heart. Highest levels in the eye, brain, kidney and harderian gland. In the brain, especially located to the suprachiasma nucleus (SCN).

Its subcellular location is the cytoplasm. It is found in the nucleus. Functionally, transcriptional repressor which forms a core component of the circadian clock. The circadian clock, an internal time-keeping system, regulates various physiological processes through the generation of approximately 24 hour circadian rhythms in gene expression, which are translated into rhythms in metabolism and behavior. It is derived from the Latin roots 'circa' (about) and 'diem' (day) and acts as an important regulator of a wide array of physiological functions including metabolism, sleep, body temperature, blood pressure, endocrine, immune, cardiovascular, and renal function. Consists of two major components: the central clock, residing in the suprachiasmatic nucleus (SCN) of the brain, and the peripheral clocks that are present in nearly every tissue and organ system. Both the central and peripheral clocks can be reset by environmental cues, also known as Zeitgebers (German for 'timegivers'). The predominant Zeitgeber for the central clock is light, which is sensed by retina and signals directly to the SCN. The central clock entrains the peripheral clocks through neuronal and hormonal signals, body temperature and feeding-related cues, aligning all clocks with the external light/dark cycle. Circadian rhythms allow an organism to achieve temporal homeostasis with its environment at the molecular level by regulating gene expression to create a peak of protein expression once every 24 hours to control when a particular physiological process is most active with respect to the solar day. Transcription and translation of core clock components (CLOCK, NPAS2, BMAL1, BMAL2, PER1, PER2, PER3, CRY1 and CRY2) plays a critical role in rhythm generation, whereas delays imposed by post-translational modifications (PTMs) are important for determining the period (tau) of the rhythms (tau refers to the period of a rhythm and is the length, in time, of one complete cycle). A diurnal rhythm is synchronized with the day/night cycle, while the ultradian and infradian rhythms have a period shorter and longer than 24 hours, respectively. Disruptions in the circadian rhythms contribute to the pathology of cardiovascular diseases, cancer, metabolic syndromes and aging. A transcription/translation feedback loop (TTFL) forms the core of the molecular circadian clock mechanism. Transcription factors, CLOCK or NPAS2 and BMAL1 or BMAL2, form the positive limb of the feedback loop, act in the form of a heterodimer and activate the transcription of core clock genes and clock-controlled genes (involved in key metabolic processes), harboring E-box elements (5'-CACGTG-3') within their promoters. The core clock genes: PER1/2/3 and CRY1/2 which are transcriptional repressors form the negative limb of the feedback loop and interact with the CLOCK|NPAS2-BMAL1|BMAL2 heterodimer inhibiting its activity and thereby negatively regulating their own expression. This heterodimer also activates nuclear receptors NR1D1/2 and RORA/B/G, which form a second feedback loop and which activate and repress BMAL1 transcription, respectively. CRY1 and CRY2 have redundant functions but also differential and selective contributions at least in defining the pace of the SCN circadian clock and its circadian transcriptional outputs. More potent transcriptional repressor in cerebellum and liver than CRY2, though more effective in lengthening the period of the SCN oscillator. On its side, CRY2 seems to play a critical role in tuning SCN circadian period by opposing the action of CRY1. With CRY2, is dispensable for circadian rhythm generation but necessary for the development of intercellular networks for rhythm synchrony. Capable of translocating circadian clock core proteins such as PER proteins to the nucleus. Interacts with CLOCK-BMAL1 independently of PER proteins and is found at CLOCK-BMAL1-bound sites, suggesting that CRY may act as a molecular gatekeeper to maintain CLOCK-BMAL1 in a poised and repressed state until the proper time for transcriptional activation. Represses the CLOCK-BMAL1 induced transcription of BHLHE40/DEC1, ATF4, MTA1, KLF10 and NAMPT. May repress circadian target genes expression in collaboration with HDAC1 and HDAC2 through histone deacetylation. Mediates the clock-control activation of ATR and modulates ATR-mediated DNA damage checkpoint. In liver, mediates circadian regulation of cAMP signaling and gluconeogenesis by binding to membrane-coupled G proteins and blocking glucagon-mediated increases in intracellular cAMP concentrations and CREB1 phosphorylation. Inhibits hepatic gluconeogenesis by decreasing nuclear FOXO1 levels that down-regulates gluconeogenic gene expression. Besides its role in the maintenance of the circadian clock, is also involved in the regulation of other processes. Represses glucocorticoid receptor NR3C1/GR-induced transcriptional activity by binding to glucocorticoid response elements (GREs). Plays a key role in glucose and lipid metabolism modulation, in part, through the transcriptional regulation of genes involved in these pathways, such as LEP or ACSL4. Represses PPARD and its target genes in the skeletal muscle and limits exercise capacity. Plays an essential role in the generation of circadian rhythms in the retina. Represses the transcriptional activity of NR1I2. This Spalax judaei (Judean Mountains blind mole rat) protein is Cryptochrome-1 (CRY1).